We begin with the raw amino-acid sequence, 465 residues long: Uronate isomerase (465 aa).

This sequence belongs to the metallo-dependent hydrolases superfamily. Uronate isomerase family.

The catalysed reaction is D-glucuronate = D-fructuronate. It carries out the reaction aldehydo-D-galacturonate = keto-D-tagaturonate. It participates in carbohydrate metabolism; pentose and glucuronate interconversion. This chain is Uronate isomerase, found in Streptococcus equi subsp. zooepidemicus (strain MGCS10565).